An 836-amino-acid chain; its full sequence is Probable RING finger protein 207 homolog (836 aa).

Residues 8–42 (CTICKNDFEEPILFSCQHTTCRKCSNGSPSCKTCS) form an RING-type zinc finger. A B box-type 1; atypical zinc finger spans residues 68 to 115 (EEMEQCANCEQITLPMFYCETCQQSLCLACRNVTHQARMFSSHKIISS). Residues Cys-73, Cys-76, Cys-97, and His-102 each coordinate Zn(2+). The segment at 122–164 (YSSSLCKDHNEPYILYCSDVRKLVCIQCFNGRPLEERHSFISI) adopts a B box-type 2; degenerate zinc-finger fold. The stretch at 527 to 557 (QNRIMAIEKEEENRRLNQEAKKKEELAGQSA) forms a coiled coil. Residues 540 to 552 (RRLNQEAKKKEEL) show a composition bias toward basic and acidic residues. Residues 540-571 (RRLNQEAKKKEELAGQSAAMKSLKHGKTKRKE) form a disordered region. A compositionally biased stretch (basic residues) spans 561–571 (SLKHGKTKRKE).

In Caenorhabditis briggsae, this protein is Probable RING finger protein 207 homolog.